Here is a 500-residue protein sequence, read N- to C-terminus: NAD(P)H-quinone oxidoreductase chain 4, chloroplastic (500 aa).

14 helical membrane-spanning segments follow: residues 4–24, 35–55, 87–107, 113–130, 134–154, 167–187, 207–227, 242–262, 272–292, 305–325, 330–350, 386–406, 416–436, and 462–482; these read FPWLTIIVVLPIFAGSLIFFL, YTICICMLELLLTTYAFCYHF, LGPVLLTGFITTLATLAAWPV, LFHFLMLAMYSGQIGSFS, LLLFFIMWELELIPVYLLLSM, FILYTAGGSIFLLMGVLGVGL, VALEIIFYIGFLIAFAVKLPI, HYSTCMLLAGILLKMGAYGLI, AHSIFSPWLMVVGTIQIIYAA, IAYSSVSHMGFILIGIASITD, GAILQIISHGFIGAALFFLAG, LALPGMSGFVAEVLVFLGIIT, IAITFVMAIGMILTPIYLLSM, and LFVSISIFIPVIGIGMYPDFV.

The protein belongs to the complex I subunit 4 family.

It localises to the plastid. The protein resides in the chloroplast thylakoid membrane. The catalysed reaction is a plastoquinone + NADH + (n+1) H(+)(in) = a plastoquinol + NAD(+) + n H(+)(out). The enzyme catalyses a plastoquinone + NADPH + (n+1) H(+)(in) = a plastoquinol + NADP(+) + n H(+)(out). This Helianthus annuus (Common sunflower) protein is NAD(P)H-quinone oxidoreductase chain 4, chloroplastic.